We begin with the raw amino-acid sequence, 180 residues long: Translation initiation factor IF-3 (180 aa).

This sequence belongs to the IF-3 family. In terms of assembly, monomer.

It is found in the cytoplasm. IF-3 binds to the 30S ribosomal subunit and shifts the equilibrium between 70S ribosomes and their 50S and 30S subunits in favor of the free subunits, thus enhancing the availability of 30S subunits on which protein synthesis initiation begins. This Salmonella typhimurium (strain LT2 / SGSC1412 / ATCC 700720) protein is Translation initiation factor IF-3.